The chain runs to 75 residues: U6-lycotoxin-Ls1d (75 aa).

Positions 1-21 (MKLLLFTALVLVVISLIEVEA) are cleaved as a signal peptide. Residues 22–25 (ENER) constitute a propeptide that is removed on maturation.

Belongs to the neurotoxin 19 (CSTX) family. 06 (U6-Lctx) subfamily. Contains 4 disulfide bonds. As to expression, expressed by the venom gland.

Its subcellular location is the secreted. The sequence is that of U6-lycotoxin-Ls1d from Lycosa singoriensis (Wolf spider).